The following is a 152-amino-acid chain: Ribonuclease pancreatic (152 aa).

An N-terminal signal peptide occupies residues 1-24; sequence MALDKSVILLPLLVLVLLVLGCLG. Residues Lys-31 and Arg-34 each coordinate substrate. His-36 acts as the Proton acceptor in catalysis. Asn-46 is a glycosylation site (N-linked (GlcNAc...) asparagine). 4 disulfides stabilise this stretch: Cys-50–Cys-108, Cys-64–Cys-119, Cys-82–Cys-134, and Cys-89–Cys-96. Substrate is bound by residues 65 to 69, Lys-90, and Arg-109; that span reads KPVNT. Asn-112 carries an N-linked (GlcNAc...) asparagine glycan. His-143 serves as the catalytic Proton donor.

This sequence belongs to the pancreatic ribonuclease family. Monomer. Interacts with and forms tight 1:1 complexes with RNH1. Dimerization of two such complexes may occur. Interaction with RNH1 inhibits this protein.

It is found in the secreted. It carries out the reaction an [RNA] containing cytidine + H2O = an [RNA]-3'-cytidine-3'-phosphate + a 5'-hydroxy-ribonucleotide-3'-[RNA].. The enzyme catalyses an [RNA] containing uridine + H2O = an [RNA]-3'-uridine-3'-phosphate + a 5'-hydroxy-ribonucleotide-3'-[RNA].. In terms of biological role, endonuclease that catalyzes the cleavage of RNA on the 3' side of pyrimidine nucleotides. Acts on single-stranded and double-stranded RNA. This chain is Ribonuclease pancreatic (RNASE1), found in Papio hamadryas (Hamadryas baboon).